A 117-amino-acid polypeptide reads, in one-letter code: Cell cycle protein GpsB (117 aa).

Positions L32–G70 form a coiled coil.

This sequence belongs to the GpsB family. As to quaternary structure, forms polymers through the coiled coil domains. Interacts with PBP1, MreC and EzrA.

Its subcellular location is the cytoplasm. In terms of biological role, divisome component that associates with the complex late in its assembly, after the Z-ring is formed, and is dependent on DivIC and PBP2B for its recruitment to the divisome. Together with EzrA, is a key component of the system that regulates PBP1 localization during cell cycle progression. Its main role could be the removal of PBP1 from the cell pole after pole maturation is completed. Also contributes to the recruitment of PBP1 to the division complex. Not essential for septum formation. The polypeptide is Cell cycle protein GpsB (Levilactobacillus brevis (strain ATCC 367 / BCRC 12310 / CIP 105137 / JCM 1170 / LMG 11437 / NCIMB 947 / NCTC 947) (Lactobacillus brevis)).